Consider the following 149-residue polypeptide: Large ribosomal subunit protein bL9 (149 aa).

It belongs to the bacterial ribosomal protein bL9 family.

Functionally, binds to the 23S rRNA. The protein is Large ribosomal subunit protein bL9 of Bacillus pumilus (strain SAFR-032).